The sequence spans 339 residues: UDP-N-acetylglucosamine--N-acetylmuramyl-(pentapeptide) pyrophosphoryl-undecaprenol N-acetylglucosamine transferase (339 aa).

UDP-N-acetyl-alpha-D-glucosamine-binding positions include 11-13 (TGG), Asn-127, Arg-170, Ser-188, Ile-235, and Gln-280.

Belongs to the glycosyltransferase 28 family. MurG subfamily.

It is found in the cell inner membrane. The enzyme catalyses di-trans,octa-cis-undecaprenyl diphospho-N-acetyl-alpha-D-muramoyl-L-alanyl-D-glutamyl-meso-2,6-diaminopimeloyl-D-alanyl-D-alanine + UDP-N-acetyl-alpha-D-glucosamine = di-trans,octa-cis-undecaprenyl diphospho-[N-acetyl-alpha-D-glucosaminyl-(1-&gt;4)]-N-acetyl-alpha-D-muramoyl-L-alanyl-D-glutamyl-meso-2,6-diaminopimeloyl-D-alanyl-D-alanine + UDP + H(+). It participates in cell wall biogenesis; peptidoglycan biosynthesis. Its function is as follows. Cell wall formation. Catalyzes the transfer of a GlcNAc subunit on undecaprenyl-pyrophosphoryl-MurNAc-pentapeptide (lipid intermediate I) to form undecaprenyl-pyrophosphoryl-MurNAc-(pentapeptide)GlcNAc (lipid intermediate II). The chain is UDP-N-acetylglucosamine--N-acetylmuramyl-(pentapeptide) pyrophosphoryl-undecaprenol N-acetylglucosamine transferase from Thermotoga petrophila (strain ATCC BAA-488 / DSM 13995 / JCM 10881 / RKU-1).